A 402-amino-acid polypeptide reads, in one-letter code: Enoyl-[acyl-carrier-protein] reductase [NADH] (402 aa).

NAD(+)-binding positions include 48–53 (GASSGY), 74–75 (FE), 111–112 (DA), and 140–141 (LA). Tyrosine 226 contributes to the substrate binding site. Residue tyrosine 236 is the Proton donor of the active site. NAD(+) is bound by residues lysine 245 and 274–276 (VVT).

Belongs to the TER reductase family. As to quaternary structure, monomer.

The catalysed reaction is a 2,3-saturated acyl-[ACP] + NAD(+) = a (2E)-enoyl-[ACP] + NADH + H(+). It catalyses the reaction a 2,3-saturated acyl-CoA + NAD(+) = a (2E)-enoyl-CoA + NADH + H(+). The protein operates within lipid metabolism; fatty acid biosynthesis. Involved in the final reduction of the elongation cycle of fatty acid synthesis (FAS II). Catalyzes the reduction of a carbon-carbon double bond in an enoyl moiety that is covalently linked to an acyl carrier protein (ACP). It can also use crotonyl-CoA. The chain is Enoyl-[acyl-carrier-protein] reductase [NADH] from Xanthomonas oryzae pv. oryzae (strain MAFF 311018).